Here is a 1195-residue protein sequence, read N- to C-terminus: Error-prone DNA polymerase (1195 aa).

The segment at 1163-1195 is disordered; that stretch reads ALNGDRRDTPDAPAQRHRHPRDVRILPPSRDFH.

This sequence belongs to the DNA polymerase type-C family. DnaE2 subfamily.

The protein localises to the cytoplasm. The catalysed reaction is DNA(n) + a 2'-deoxyribonucleoside 5'-triphosphate = DNA(n+1) + diphosphate. Functionally, DNA polymerase involved in damage-induced mutagenesis and translesion synthesis (TLS). It is not the major replicative DNA polymerase. In Rhodopseudomonas palustris (strain ATCC BAA-98 / CGA009), this protein is Error-prone DNA polymerase.